The primary structure comprises 224 residues: UPF0758 protein PSPPH_0210 (224 aa).

The 123-residue stretch at Ala-102–Met-224 folds into the MPN domain. Positions 173, 175, and 186 each coordinate Zn(2+). The JAMM motif motif lies at His-173–Asp-186.

Belongs to the UPF0758 family.

This is UPF0758 protein PSPPH_0210 from Pseudomonas savastanoi pv. phaseolicola (strain 1448A / Race 6) (Pseudomonas syringae pv. phaseolicola (strain 1448A / Race 6)).